We begin with the raw amino-acid sequence, 246 residues long: Pyridoxine 5'-phosphate synthase (246 aa).

3-amino-2-oxopropyl phosphate contacts are provided by Asn8 and Arg19. His44 functions as the Proton acceptor in the catalytic mechanism. Residues Arg46 and His51 each contribute to the 1-deoxy-D-xylulose 5-phosphate site. Catalysis depends on Glu76, which acts as the Proton acceptor. 1-deoxy-D-xylulose 5-phosphate is bound at residue Thr106. Residue His198 is the Proton donor of the active site. 3-amino-2-oxopropyl phosphate contacts are provided by residues Asp199 and 221 to 222 (GH).

The protein belongs to the PNP synthase family. As to quaternary structure, homooctamer; tetramer of dimers.

It localises to the cytoplasm. The catalysed reaction is 3-amino-2-oxopropyl phosphate + 1-deoxy-D-xylulose 5-phosphate = pyridoxine 5'-phosphate + phosphate + 2 H2O + H(+). The protein operates within cofactor biosynthesis; pyridoxine 5'-phosphate biosynthesis; pyridoxine 5'-phosphate from D-erythrose 4-phosphate: step 5/5. Catalyzes the complicated ring closure reaction between the two acyclic compounds 1-deoxy-D-xylulose-5-phosphate (DXP) and 3-amino-2-oxopropyl phosphate (1-amino-acetone-3-phosphate or AAP) to form pyridoxine 5'-phosphate (PNP) and inorganic phosphate. This chain is Pyridoxine 5'-phosphate synthase, found in Brucella abortus (strain S19).